The following is a 507-amino-acid chain: DNA ligase B (507 aa).

The tract at residues methionine 1–alanine 172 is not required for adenylyltransferase activity, required for nick joining. Glutamate 209 provides a ligand contact to ATP. Residue lysine 211 is the N6-AMP-lysine intermediate of the active site. ATP-binding residues include arginine 216, arginine 231, glutamate 260, phenylalanine 300, arginine 372, and lysine 378.

This sequence belongs to the ATP-dependent DNA ligase family. In terms of assembly, monomer. Mg(2+) is required as a cofactor.

It catalyses the reaction ATP + (deoxyribonucleotide)n-3'-hydroxyl + 5'-phospho-(deoxyribonucleotide)m = (deoxyribonucleotide)n+m + AMP + diphosphate.. Its function is as follows. DNA ligase that seals nicks in double-stranded DNA during DNA replication, DNA recombination and DNA repair. The sequence is that of DNA ligase B (ligB) from Mycobacterium tuberculosis (strain ATCC 25618 / H37Rv).